A 462-amino-acid chain; its full sequence is Polygalacturonase (462 aa).

The first 22 residues, 1–22, serve as a signal peptide directing secretion; sequence MALTRLLLPISILWFCFYSSHT. Residue N173 is glycosylated (N-linked (GlcNAc...) asparagine). D278 acts as the Proton donor in catalysis. C280 and C297 form a disulfide bridge. Residue N294 is glycosylated (N-linked (GlcNAc...) asparagine). The active site involves H301. N-linked (GlcNAc...) asparagine glycosylation occurs at N358. 2 disulfide bridges follow: C407/C413 and C435/C460.

This sequence belongs to the glycosyl hydrolase 28 family.

It localises to the secreted. Its subcellular location is the cell wall. The enzyme catalyses (1,4-alpha-D-galacturonosyl)n+m + H2O = (1,4-alpha-D-galacturonosyl)n + (1,4-alpha-D-galacturonosyl)m.. Its function is as follows. Acts in concert with the pectinesterase, in the ripening process. Is involved in cell wall metabolism, specifically in polyuronide degradation. The sequence is that of Polygalacturonase from Persea americana (Avocado).